Here is a 342-residue protein sequence, read N- to C-terminus: Cilia- and flagella-associated protein 36 (342 aa).

A phosphoserine mark is found at serine 85 and serine 147. Residues 150 to 187 adopt a coiled-coil conformation; the sequence is EHEEMKILREVLRKSKEEYDQEEERKRKKQLSEAKTEE. A disordered region spans residues 166-194; sequence EEYDQEEERKRKKQLSEAKTEEPTVHSSE. Residues 179–189 show a composition bias toward basic and acidic residues; it reads QLSEAKTEEPT. Residue serine 201 is modified to Phosphoserine. 2 disordered regions span residues 229–250 and 282–322; these read RKVE…PGLE and KLMS…AEEK. Composition is skewed to basic and acidic residues over residues 282-292 and 300-322; these read KLMSMRKDMRT and QKGK…AEEK.

Belongs to the CFAP36 family. As to quaternary structure, interacts with ARL3. In terms of tissue distribution, expressed in several human tissues including brain, testis, heart, lung, pancreas and spleen (at protein level).

It is found in the nucleus. Its subcellular location is the cytoplasm. It localises to the cell projection. The protein localises to the cilium. The protein resides in the flagellum. May act as an effector for ARL3. The sequence is that of Cilia- and flagella-associated protein 36 (CFAP36) from Homo sapiens (Human).